A 175-amino-acid polypeptide reads, in one-letter code: Ribosome maturation factor RimM (175 aa).

In terms of domain architecture, PRC barrel spans glutamate 96 to phenylalanine 175.

This sequence belongs to the RimM family. As to quaternary structure, binds ribosomal protein uS19.

Its subcellular location is the cytoplasm. An accessory protein needed during the final step in the assembly of 30S ribosomal subunit, possibly for assembly of the head region. Essential for efficient processing of 16S rRNA. May be needed both before and after RbfA during the maturation of 16S rRNA. It has affinity for free ribosomal 30S subunits but not for 70S ribosomes. This Aliivibrio fischeri (strain ATCC 700601 / ES114) (Vibrio fischeri) protein is Ribosome maturation factor RimM.